The sequence spans 242 residues: ATP-dependent dethiobiotin synthetase BioD (242 aa).

An ATP-binding site is contributed by 15–20 (DVGKTV). Residue threonine 19 participates in Mg(2+) binding. The active site involves lysine 40. Serine 44 contacts substrate. Glutamate 117 serves as a coordination point for Mg(2+). ATP is bound by residues 117–120 (EGAG), 178–179 (NQ), and 208–210 (PYS).

This sequence belongs to the dethiobiotin synthetase family. As to quaternary structure, homodimer. Mg(2+) serves as cofactor.

It is found in the cytoplasm. The catalysed reaction is (7R,8S)-7,8-diammoniononanoate + CO2 + ATP = (4R,5S)-dethiobiotin + ADP + phosphate + 3 H(+). It functions in the pathway cofactor biosynthesis; biotin biosynthesis; biotin from 7,8-diaminononanoate: step 1/2. In terms of biological role, catalyzes a mechanistically unusual reaction, the ATP-dependent insertion of CO2 between the N7 and N8 nitrogen atoms of 7,8-diaminopelargonic acid (DAPA, also called 7,8-diammoniononanoate) to form a ureido ring. The polypeptide is ATP-dependent dethiobiotin synthetase BioD (Halalkalibacterium halodurans (strain ATCC BAA-125 / DSM 18197 / FERM 7344 / JCM 9153 / C-125) (Bacillus halodurans)).